Consider the following 348-residue polypeptide: MTAPSQVLKIRRPDDWHVHLRDGDMLKTVVPYTSEIYGRAIVMPNLASPITTVDAAIAYRQRILDAVPAGHDFTPLMTCYLTDSLDADELERGFHEGVFTAAKLYPANATTNSSHGVTSVDAIMPVLERMEKLGMPLLVHGEVTHADVDIFDREARFIDTVMEPLRQRLTTLKVVFEHITTKDAAQYVRDGNDYLAATITPQHLMFNRNDMLVGGIRPHLYCLPILKRNIHQQALRELVASGFTRAFLGTDSAPHSRHRKETSCGCAGCFNAPSALGSYAAVFEEMNALAHFEAFCSLNGPQFYGLPVNTGWVELVRDEQQVPENIALADDSLVPFLAGETVRWSVKK.

2 residues coordinate Zn(2+): histidine 17 and histidine 19. Substrate is bound by residues 19–21 (HLR) and asparagine 45. The Zn(2+) site is built by lysine 103, histidine 140, and histidine 178. Lysine 103 carries the N6-carboxylysine modification. Substrate is bound at residue histidine 140. Substrate is bound at residue leucine 223. Residue aspartate 251 participates in Zn(2+) binding. The active site involves aspartate 251. Residues histidine 255 and alanine 267 each contribute to the substrate site.

The protein belongs to the metallo-dependent hydrolases superfamily. DHOase family. Class II DHOase subfamily. As to quaternary structure, homodimer. The cofactor is Zn(2+).

It catalyses the reaction (S)-dihydroorotate + H2O = N-carbamoyl-L-aspartate + H(+). It participates in pyrimidine metabolism; UMP biosynthesis via de novo pathway; (S)-dihydroorotate from bicarbonate: step 3/3. In terms of biological role, catalyzes the reversible cyclization of carbamoyl aspartate to dihydroorotate. In Salmonella paratyphi C (strain RKS4594), this protein is Dihydroorotase.